The chain runs to 2488 residues: PKS-NRPS hybrid synthetase swnK (2488 aa).

Positions 33–422 (FEQVADRFPD…GRIDGVVKIR (390 aa)) are adenylation (A) domain. The Carrier 1 domain occupies 523-598 (QPTSELEQRI…ALAAYLAGTG (76 aa)). Ser558 carries the post-translational modification O-(pantetheine 4'-phosphoryl)serine. The Ketosynthase family 3 (KS3) domain occupies 616–1039 (HEDIAIVSMA…GTNAHVIVEE (424 aa)). Catalysis depends on for beta-ketoacyl synthase activity residues Cys785, His920, and His960. A malonyl-CoA:ACP transacylase (MAT) domain region spans residues 1149–1471 (LFTGQGSQLP…SLSELHVRHV (323 aa)). Residues 1723-1901 (GAVLVTGGLG…ASSVAYGTWA (179 aa)) form a ketoreductase (KR) domain region. The Carrier 2 domain occupies 2002-2077 (SIVLHMVQAT…SLSEFLLCRL (76 aa)). Ser2037 carries the O-(pantetheine 4'-phosphoryl)serine modification. Residues 2084 to 2103 (STSSPSDTDGATPSTPTSAA) are disordered. The thioester reductase (TE) domain stretch occupies residues 2136-2364 (VTGATGFVGT…VLPVDYLCGT (229 aa)).

The protein in the N-terminal section; belongs to the NRP synthetase family.

It catalyses the reaction L-pipecolate + malonyl-CoA + 2 NADPH + 4 H(+) = (8aS)-octahydroindolizin-1-one + CO2 + 2 NADP(+) + CoA + 2 H2O. It carries out the reaction L-pipecolate + malonyl-CoA + 3 NADPH + 5 H(+) = (1R,8aS)-octahydroindolizin-1-ol + CO2 + 3 NADP(+) + CoA + 2 H2O. The enzyme catalyses L-pipecolate + malonyl-CoA + 3 NADPH + 5 H(+) = (1S,8aS)-octahydroindolizin-1-ol + CO2 + 3 NADP(+) + CoA + 2 H2O. It participates in mycotoxin biosynthesis. Functionally, PKS-NRPS hybrid synthetase; part of the gene cluster that mediates the biosynthesis of swainsonine (SW), a cytotoxic fungal alkaloid and a potential cancer therapy drug. Swainsonine production occurs via a multibranched pathway and is dispensable for fungal colonization of plants and infection of insect hosts. The first step of swainsonine biosynthesis is the production of the precursor pipecolic acid (PA) via conversion of L-lysine (Lys) to 1-piperideine-6-carboxylate (P6C) by the aminotransferase swnA, the latter being further reduced to PA by the reductase swnR. PA can be converted from lysine by both the SW biosynthetic cluster and the unclustered genes such as lysine cyclodeaminase. The PKS-NRPS hybrid synthetase swnK uptakes and condensates PA and malonyl-CoA with and without skipping of the ketoreductase (KR) domain in order to produce 3 intermediates, 1-oxoindolizidine, (1S)-1-hydroxyindolizin, and (1R)-1-hydroxyindolizine; with the transisomer (1S)-1-hydroxyindolizin being predominant. The terminal thioester reductase (TE) domain of swnK is involved in reduction of the thioester bond to release the intermediate aldehydes. The oxidoreductase swnN could contribute to the reduction of 1-oxoindolizidine to (1S)-1-hydroxyindolizin and (1R)-1-hydroxyindolizine, contributing to the major route of SW production. The dioxygenase swnH2 would be responsible for the oxidization of (1R)-1-hydroxyindolizine into (1R,2S)-1,2-dihydroxyindolizine and of (1S)-1-hydroxyindolizin to yield both (1R,2S)-1,2-dihydroxyindolizine and (1S,2S)-1,2-dihydroxyindolizine. The dioxygenase swnH1 then performs the conversion of the 1,2-dihydroxyindolizine epimers to SW. The chain is PKS-NRPS hybrid synthetase swnK from Metarhizium robertsii (strain ARSEF 23 / ATCC MYA-3075) (Metarhizium anisopliae (strain ARSEF 23)).